A 338-amino-acid polypeptide reads, in one-letter code: MNNSTTTDPPNQPCSWNTLITKQIIPVLYGMVFITGLLLNGISGWIFFYVPSSKSFIIYLKNIVVADFLMGLTFPFKVLGDSGLGPWQVNVFVCRVSAVIFYVNMYVSIVFFGLISFDRYYKIVKPLLTSIVQSVNYSKLLSVLVWMLMLLLAVPNIILTNQGVKEVTKIQCMELKNELGRKWHKASNYIFVSIFWVVFLLLIVFYTAITRKIFKSHLKSRKNSTSVKRKSSRNIFSIVLVFVVCFVPYHIARIPYTKSQTEGHYSCRTKETLLYAKEFTLLLSAANVCLDPIIYFFLCQPFREVLNKKLHMSLKVQNDLEVSKTKRENAIHESTDTL.

Over 1–29 (MNNSTTTDPPNQPCSWNTLITKQIIPVLY) the chain is Extracellular. 2 N-linked (GlcNAc...) asparagine glycosylation sites follow: Asn2 and Asn3. The chain crosses the membrane as a helical span at residues 30 to 50 (GMVFITGLLLNGISGWIFFYV). Residues 51-55 (PSSKS) are Cytoplasmic-facing. A helical transmembrane segment spans residues 56–76 (FIIYLKNIVVADFLMGLTFPF). The Extracellular portion of the chain corresponds to 77 to 96 (KVLGDSGLGPWQVNVFVCRV). A disulfide bond links Cys94 and Cys172. Residues 97–117 (SAVIFYVNMYVSIVFFGLISF) traverse the membrane as a helical segment. Topologically, residues 118 to 139 (DRYYKIVKPLLTSIVQSVNYSK) are cytoplasmic. A helical membrane pass occupies residues 140–160 (LLSVLVWMLMLLLAVPNIILT). At 161–188 (NQGVKEVTKIQCMELKNELGRKWHKASN) the chain is on the extracellular side. A helical transmembrane segment spans residues 189–209 (YIFVSIFWVVFLLLIVFYTAI). The Cytoplasmic segment spans residues 210 to 234 (TRKIFKSHLKSRKNSTSVKRKSSRN). The chain crosses the membrane as a helical span at residues 235–255 (IFSIVLVFVVCFVPYHIARIP). At 256-278 (YTKSQTEGHYSCRTKETLLYAKE) the chain is on the extracellular side. A helical membrane pass occupies residues 279-299 (FTLLLSAANVCLDPIIYFFLC). Over 300–338 (QPFREVLNKKLHMSLKVQNDLEVSKTKRENAIHESTDTL) the chain is Cytoplasmic.

This sequence belongs to the G-protein coupled receptor 1 family.

The protein resides in the cell membrane. Functionally, receptor for UDP-glucose coupled to G-proteins. The polypeptide is P2Y purinoceptor 14 (P2ry14) (Mus musculus (Mouse)).